A 542-amino-acid chain; its full sequence is Chaperonin GroEL (542 aa).

ATP is bound by residues 29-32 (TLGP), 86-90 (DGTTT), Gly413, 476-478 (NAA), and Asp492. The interval 521–542 (QPDENGPAAGPDMGMGGMGGMM) is disordered. Over residues 533-542 (MGMGGMGGMM) the composition is skewed to gly residues.

Belongs to the chaperonin (HSP60) family. As to quaternary structure, forms a cylinder of 14 subunits composed of two heptameric rings stacked back-to-back. Interacts with the co-chaperonin GroES.

The protein resides in the cytoplasm. The enzyme catalyses ATP + H2O + a folded polypeptide = ADP + phosphate + an unfolded polypeptide.. In terms of biological role, together with its co-chaperonin GroES, plays an essential role in assisting protein folding. The GroEL-GroES system forms a nano-cage that allows encapsulation of the non-native substrate proteins and provides a physical environment optimized to promote and accelerate protein folding. The protein is Chaperonin GroEL of Listeria innocua serovar 6a (strain ATCC BAA-680 / CLIP 11262).